The primary structure comprises 268 residues: Octanoyltransferase (268 aa).

Positions 49 to 237 (GTQGDVILVV…ALLKALSGEL (189 aa)) constitute a BPL/LPL catalytic domain. Residues 87-94 (RGGRITWH), 167-169 (ALG), and 180-182 (GLA) each bind substrate. Cysteine 198 functions as the Acyl-thioester intermediate in the catalytic mechanism.

This sequence belongs to the LipB family.

It localises to the cytoplasm. It carries out the reaction octanoyl-[ACP] + L-lysyl-[protein] = N(6)-octanoyl-L-lysyl-[protein] + holo-[ACP] + H(+). It functions in the pathway protein modification; protein lipoylation via endogenous pathway; protein N(6)-(lipoyl)lysine from octanoyl-[acyl-carrier-protein]: step 1/2. Functionally, catalyzes the transfer of endogenously produced octanoic acid from octanoyl-acyl-carrier-protein onto the lipoyl domains of lipoate-dependent enzymes. Lipoyl-ACP can also act as a substrate although octanoyl-ACP is likely to be the physiological substrate. In Corynebacterium aurimucosum (strain ATCC 700975 / DSM 44827 / CIP 107346 / CN-1) (Corynebacterium nigricans), this protein is Octanoyltransferase.